The primary structure comprises 538 residues: Mitochondria-eating protein (538 aa).

Residues 1–273 (MAENLKRLVS…PRSRSCSRSR (273 aa)) are interaction with YWHAG/14-3-3 protein gamma. S85 is modified (phosphoserine). A disordered region spans residues 97–137 (SKVPSLQDTFDRERHKDPSPRDRDMQQLDSNLNSTRSQCNQ). A compositionally biased stretch (basic and acidic residues) spans 105-122 (TFDRERHKDPSPRDRDMQ). Coiled coils occupy residues 118–187 (DRDM…RHRN) and 219–256 (DQQDTEAMSDYKKQLRNLKEEIAVLSAEKSALQGRSSR). Residues 123-137 (QLDSNLNSTRSQCNQ) show a composition bias toward polar residues. 2 positions are modified to phosphoserine: S156 and S159. 2 disordered regions span residues 173–226 (QLKS…TEAM) and 247–294 (KSAL…SKLS). Over residues 181 to 210 (EDARHRNTDQRSSENRRSEPWSLEERKREQ) the composition is skewed to basic and acidic residues. The segment covering 211 to 224 (WNSLKQNADQQDTE) has biased composition (polar residues). Positions 253 to 278 (RSSRSRSPSPAPRSRSCSRSRSASPS) are enriched in low complexity. Residues S287 and S509 each carry the phosphoserine modification.

The protein belongs to the MIEAP family. Interacts (via coiled-coil domains) with BNIP3L (via BH3 domain). Interacts (via coiled-coil domains) with BNIP3 (via BH3 domain). In terms of assembly, interacts with YWHAG/14-3-3 protein gamma; a protein that also plays a role in MALM.

It localises to the cytoplasm. It is found in the cytosol. The protein resides in the mitochondrion outer membrane. Its subcellular location is the mitochondrion matrix. Its function is as follows. Key regulator of mitochondrial quality that mediates the repairing or degradation of unhealthy mitochondria in response to mitochondrial damage. Mediator of mitochondrial protein catabolic process (also named MALM) by mediating the degradation of damaged proteins inside mitochondria by promoting the accumulation in the mitochondrial matrix of hydrolases that are characteristic of the lysosomal lumen. Also involved in mitochondrion degradation of damaged mitochondria by promoting the formation of vacuole-like structures (named MIV), which engulf and degrade unhealthy mitochondria by accumulating lysosomes. The physical interaction of SPATA18/MIEAP, BNIP3 and BNIP3L/NIX at the mitochondrial outer membrane regulates the opening of a pore in the mitochondrial double membrane in order to mediate the translocation of lysosomal proteins from the cytoplasm to the mitochondrial matrix. Binds cardiolipin. May form molecular condensates (non-membrane-bounded organelles) within mitochondria that compartmentalize and promote cardiolipin metabolism. This is Mitochondria-eating protein (SPATA18) from Homo sapiens (Human).